The sequence spans 227 residues: PKHD-type hydroxylase GDI1238/Gdia_1949 (227 aa).

The 101-residue stretch at 78–178 (RVVPPLFNRY…RLASFFWTQS (101 aa)) folds into the Fe2OG dioxygenase domain. Fe cation contacts are provided by H96, D98, and H159. Residue R169 participates in 2-oxoglutarate binding.

Fe(2+) serves as cofactor. Requires L-ascorbate as cofactor.

The protein is PKHD-type hydroxylase GDI1238/Gdia_1949 of Gluconacetobacter diazotrophicus (strain ATCC 49037 / DSM 5601 / CCUG 37298 / CIP 103539 / LMG 7603 / PAl5).